Consider the following 145-residue polypeptide: Large ribosomal subunit protein bL19 (145 aa).

Belongs to the bacterial ribosomal protein bL19 family.

In terms of biological role, this protein is located at the 30S-50S ribosomal subunit interface and may play a role in the structure and function of the aminoacyl-tRNA binding site. The protein is Large ribosomal subunit protein bL19 of Brucella anthropi (strain ATCC 49188 / DSM 6882 / CCUG 24695 / JCM 21032 / LMG 3331 / NBRC 15819 / NCTC 12168 / Alc 37) (Ochrobactrum anthropi).